We begin with the raw amino-acid sequence, 460 residues long: Metal cation symporter ZIP8 (460 aa).

The first 22 residues, 1–22 (MAPGRAVAGLLLLAAAGLGGVA), serve as a signal peptide directing secretion. Residues 23–132 (EGPGLAFSED…PSHSEVWGYG (110 aa)) are Extracellular-facing. N40 and N88 each carry an N-linked (GlcNAc...) asparagine glycan. A helical membrane pass occupies residues 133-153 (FLSVTIINLASLLGLILTPLI). Topologically, residues 154 to 160 (KKSYFPK) are cytoplasmic. Residues 161 to 181 (ILTFFVGLAIGTLFSNAIFQL) form a helical membrane-spanning segment. At 182 to 191 (IPEAFGFDPK) the chain is on the extracellular side. The chain crosses the membrane as a helical span at residues 192-212 (VDSYVEKAVAVFGGFYLLFFF). Residues 213–365 (ERMLKMLLKT…LNAGMSTRQA (153 aa)) are Cytoplasmic-facing. The XEXPHE-motif signature appears at 343-348 (EEFPHE). The chain crosses the membrane as a helical span at residues 366–386 (LLFNFLSACSCYVGLAFGILV). The Extracellular portion of the chain corresponds to 387 to 388 (GN). A helical membrane pass occupies residues 389-409 (NFAPNIIFALAGGMFLYISLA). Residues 410–429 (DMFPEMNDMLREKVTGRKTD) lie on the Cytoplasmic side of the membrane. A helical membrane pass occupies residues 430 to 450 (FTFFMIQNAGMLTGFTAILLI). Over 451-460 (TLYAGEIELE) the chain is Extracellular.

It belongs to the ZIP transporter (TC 2.A.5) family. As to quaternary structure, homodimer. In terms of processing, N-glycosylated. N-glycosylation is not required for proper iron and zinc transport. As to expression, ubiquitously expressed. Expressed in thymus, placenta, lung, liver, pancreas, salivary gland and, to a lower extent, in spleen, testis, ovary, small intestine, colon, leukocyte, heart. Highest expression is observed in pancreas. Expressed by macrophages (at protein level). Expressed by microvascular capillary endothelial cells that constitute the blood-brain barrier (at protein level).

The protein localises to the cell membrane. The protein resides in the lysosome membrane. It is found in the apical cell membrane. It localises to the basolateral cell membrane. It catalyses the reaction Zn(2+)(out) + 2 hydrogencarbonate(out) = Zn(2+)(in) + 2 hydrogencarbonate(in). The enzyme catalyses selenite(out) + Zn(2+)(out) + hydrogencarbonate(out) = selenite(in) + Zn(2+)(in) + hydrogencarbonate(in). The catalysed reaction is Mn(2+)(out) + 2 hydrogencarbonate(out) = Mn(2+)(in) + 2 hydrogencarbonate(in). It carries out the reaction Fe(2+)(out) + 2 hydrogencarbonate(out) = Fe(2+)(in) + 2 hydrogencarbonate(in). It catalyses the reaction Cd(2+)(out) + 2 hydrogencarbonate(out) = Cd(2+)(in) + 2 hydrogencarbonate(in). The enzyme catalyses Co(2+)(out) + 2 hydrogencarbonate(out) = Co(2+)(in) + 2 hydrogencarbonate(in). Its function is as follows. Electroneutral divalent metal cation:bicarbonate symporter of the plasma membrane mediating the cellular uptake of zinc and manganese, two divalent metal cations important for development, tissue homeostasis and immunity. Transports an electroneutral complex composed of a divalent metal cation and two bicarbonate anions or alternatively a bicarbonate and a selenite anion. Thereby, it also contributes to the cellular uptake of selenium, an essential trace metal and micronutrient. Also imports cadmium a non-essential metal which is cytotoxic and carcinogenic. May also transport iron and cobalt through membranes. Through zinc import, indirectly regulates the metal-dependent transcription factor MTF1 and the expression of some metalloproteases involved in cartilage catabolism and also probably heart development. Also indirectly regulates the expression of proteins involved in cell morphology and cytoskeleton organization. Indirectly controls innate immune function and inflammatory response by regulating zinc cellular uptake which in turn modulates the expression of genes specific of these processes. Protects, for instance, cells from injury and death at the onset of inflammation. By regulating zinc influx into monocytes also directly modulates their adhesion to endothelial cells and arteries. Reclaims manganese from the bile at the apical membrane of hepatocytes, thereby regulating the activity of the manganese-dependent enzymes through the systemic levels of the nutrient. Also participates in manganese reabsorption in the proximal tubule of the kidney. By mediating the extracellular uptake of manganese by cells of the blood-brain barrier, may also play a role in the transport of the micronutrient to the brain. With manganese cellular uptake also participates in mitochondrial proper function. Finally, also probably functions intracellularly, translocating zinc from lysosome to cytosol to indirectly enhance the expression of specific genes during TCR-mediated T cell activation. The protein is Metal cation symporter ZIP8 of Homo sapiens (Human).